A 282-amino-acid chain; its full sequence is Bis(5'-nucleosyl)-tetraphosphatase, symmetrical (282 aa).

This sequence belongs to the Ap4A hydrolase family.

The catalysed reaction is P(1),P(4)-bis(5'-adenosyl) tetraphosphate + H2O = 2 ADP + 2 H(+). Functionally, hydrolyzes diadenosine 5',5'''-P1,P4-tetraphosphate to yield ADP. The polypeptide is Bis(5'-nucleosyl)-tetraphosphatase, symmetrical (Salmonella paratyphi C (strain RKS4594)).